The chain runs to 515 residues: 1-pyrroline-5-carboxylate dehydrogenase (515 aa).

Residues glutamate 286 and cysteine 320 contribute to the active site.

The protein belongs to the aldehyde dehydrogenase family. RocA subfamily.

The catalysed reaction is L-glutamate 5-semialdehyde + NAD(+) + H2O = L-glutamate + NADH + 2 H(+). Its pathway is amino-acid degradation; L-proline degradation into L-glutamate; L-glutamate from L-proline: step 2/2. The chain is 1-pyrroline-5-carboxylate dehydrogenase from Bacillus mycoides (strain KBAB4) (Bacillus weihenstephanensis).